The chain runs to 485 residues: Glycogen synthase (485 aa).

Lysine 15 lines the ADP-alpha-D-glucose pocket.

This sequence belongs to the glycosyltransferase 1 family. Bacterial/plant glycogen synthase subfamily.

It carries out the reaction [(1-&gt;4)-alpha-D-glucosyl](n) + ADP-alpha-D-glucose = [(1-&gt;4)-alpha-D-glucosyl](n+1) + ADP + H(+). It functions in the pathway glycan biosynthesis; glycogen biosynthesis. Functionally, synthesizes alpha-1,4-glucan chains using ADP-glucose. The sequence is that of Glycogen synthase from Rhodospirillum rubrum (strain ATCC 11170 / ATH 1.1.1 / DSM 467 / LMG 4362 / NCIMB 8255 / S1).